A 299-amino-acid polypeptide reads, in one-letter code: Beta-lactamase VEB-1 (299 aa).

The N-terminal stretch at 1-23 is a signal peptide; that stretch reads MKIVKRILLVLLSLFFTIVYSNA. The Nucleophile; acyl-ester intermediate role is filled by S68. 3 residues coordinate a beta-lactam: K71, S131, and E167. The active-site Proton acceptor is E167.

Belongs to the class-A beta-lactamase family.

It carries out the reaction a beta-lactam + H2O = a substituted beta-amino acid. Its activity is regulated as follows. Inhibited by the beta-lactamase-blocking agent clavulanic acid. Class A beta-lactamase which confers resistance to the beta-lactam antibiotics, including penicillins and cephalosporins, in E.coli strain JM109. Acts via hydrolysis of the beta-lactam ring. Has penicillin-, and cephalosporin-hydrolyzing activities. In Pseudomonas aeruginosa, this protein is Beta-lactamase VEB-1.